Consider the following 646-residue polypeptide: Protein SENSITIVE TO UV 2 (646 aa).

Residues 42–70 (PAPPPSTKISSSLSHPMQLQSSAGQQRKQ) form a disordered region. Residues 48–70 (TKISSSLSHPMQLQSSAGQQRKQ) are compositionally biased toward polar residues. The Nuclear localization signal motif lies at 119–126 (NRRCDSEK). The stretch at 123–157 (DSEKDLEIDRLKKELERVSKQLLDVEQECSQLKKG) forms a coiled coil. Residues 376-646 (KRTEQDVKQE…VFAFLGDNTI (271 aa)) enclose the Phosphatase tensin-type domain.

Belongs to the serpin family. In terms of assembly, forms multimers through the coiled-coil domain. In terms of processing, probably phosphorylated by ATR. In terms of tissue distribution, accumulates throughout the root tip.

Its subcellular location is the nucleus. The protein resides in the cytoplasm. Required for tolerance to DNA-damaging and cross-linking agents such as UVB irradiation, gamma-radiation, aphidicolin, ionizing radiation and hydroxyurea (HU), cisplatin (CDDP) and mitomycin C (MMC). Involved in cell-cycle G2/M arrest in response to DNA damage. Required for aluminum-dependent gene regulation and root growth inhibition in an ATR-dependent manner by halting cell cycle progression and triggering loss of the quiescent center (QC). The polypeptide is Protein SENSITIVE TO UV 2 (Arabidopsis thaliana (Mouse-ear cress)).